The following is a 566-amino-acid chain: Glucose starvation modulator protein 1 (566 aa).

The zn(2)-C6 fungal-type DNA-binding region spans 20 to 48 (CVFCHQKHLQCSNERPCKNCVKRNIAHGC). Disordered stretches follow at residues 65–93 (PGAVSNKQSTPRKKLKTGPVSTSVSPMDS) and 250–270 (KQASPSPSNTSTSENNTNTLS). Over residues 83–93 (PVSTSVSPMDS) the composition is skewed to polar residues. Residues 253–270 (SPSPSNTSTSENNTNTLS) show a composition bias toward low complexity.

The protein belongs to the ERT1/acuK family.

It localises to the nucleus. In terms of biological role, transcription factor which regulates nonfermentable carbon utilization. In Candida albicans (strain SC5314 / ATCC MYA-2876) (Yeast), this protein is Glucose starvation modulator protein 1 (ZCF23).